The following is a 270-amino-acid chain: Phosphatidylglycerol--prolipoprotein diacylglyceryl transferase (270 aa).

4 helical membrane passes run 18–38, 55–75, 90–110, and 115–135; these read ITIY…LWLA, LVLF…VLFE, WQGG…GAVF, and GLSF…GQAI. Arg-137 contributes to the a 1,2-diacyl-sn-glycero-3-phospho-(1'-sn-glycerol) binding site. 3 helical membrane passes run 177–197, 205–225, and 236–256; these read HPTF…LLWL, GELF…IEGM, and LRAA…LWIV.

This sequence belongs to the Lgt family.

It is found in the cell membrane. The enzyme catalyses L-cysteinyl-[prolipoprotein] + a 1,2-diacyl-sn-glycero-3-phospho-(1'-sn-glycerol) = an S-1,2-diacyl-sn-glyceryl-L-cysteinyl-[prolipoprotein] + sn-glycerol 1-phosphate + H(+). It functions in the pathway protein modification; lipoprotein biosynthesis (diacylglyceryl transfer). Catalyzes the transfer of the diacylglyceryl group from phosphatidylglycerol to the sulfhydryl group of the N-terminal cysteine of a prolipoprotein, the first step in the formation of mature lipoproteins. The chain is Phosphatidylglycerol--prolipoprotein diacylglyceryl transferase from Geobacillus kaustophilus (strain HTA426).